The sequence spans 323 residues: Serine/threonine-protein phosphatase PP1-gamma catalytic subunit (323 aa).

Mn(2+) contacts are provided by D64, H66, D92, and N124. H125 (proton donor) is an active-site residue. The Mn(2+) site is built by H173 and H248. Residues 300–323 (EKKKPNASRPVTPPRGMITKQAKK) form a disordered region.

The protein belongs to the PPP phosphatase family. PP-1 subfamily. In terms of assembly, PP1 comprises a catalytic subunit, ppp1c1, ppp1cb or ppp1cc, which is folded into its native form by inhibitor 2 and glycogen synthetase kinase 3, and then is complexed to one or several targeting or regulatory subunits. It depends on Mn(2+) as a cofactor.

It is found in the cytoplasm. The protein resides in the nucleus. It localises to the cleavage furrow. Its subcellular location is the nucleolus. The protein localises to the nucleoplasm. It is found in the chromosome. The protein resides in the centromere. It localises to the kinetochore. Its subcellular location is the nucleus speckle. The protein localises to the midbody. It is found in the mitochondrion. The protein resides in the cytoskeleton. It localises to the microtubule organizing center. It catalyses the reaction O-phospho-L-seryl-[protein] + H2O = L-seryl-[protein] + phosphate. The catalysed reaction is O-phospho-L-threonyl-[protein] + H2O = L-threonyl-[protein] + phosphate. Its function is as follows. Protein phosphatase 1 (PP1) is essential for cell division, and participates in the regulation of glycogen metabolism, muscle contractility and protein synthesis. Promotes nuclear envelope reassembly by targeting nuclear membrane vesicles to chromatin at the end of mitosis. Acts by dephosphorylating membrane proteins such as lamin B receptor (lbr) to regulate the binding of membrane proteins to chromatin. This Xenopus tropicalis (Western clawed frog) protein is Serine/threonine-protein phosphatase PP1-gamma catalytic subunit.